Reading from the N-terminus, the 319-residue chain is Thioredoxin reductase (319 aa).

36–43 is an FAD binding site; the sequence is TGINKGGQ. C136 and C139 are joined by a disulfide. Residue 288-297 coordinates FAD; that stretch reads DVIDHVYRQA.

This sequence belongs to the class-II pyridine nucleotide-disulfide oxidoreductase family. In terms of assembly, homodimer. FAD is required as a cofactor.

It is found in the cytoplasm. The catalysed reaction is [thioredoxin]-dithiol + NADP(+) = [thioredoxin]-disulfide + NADPH + H(+). The polypeptide is Thioredoxin reductase (trxB) (Buchnera aphidicola subsp. Schizaphis graminum (strain Sg)).